We begin with the raw amino-acid sequence, 383 residues long: Deoxyhypusine synthase-like protein (383 aa).

This sequence belongs to the deoxyhypusine synthase family.

This is Deoxyhypusine synthase-like protein from Nostoc sp. (strain PCC 7120 / SAG 25.82 / UTEX 2576).